The following is a 38-amino-acid chain: Photosystem II reaction center protein L (38 aa).

Residues 17 to 37 form a helical membrane-spanning segment; sequence SLFWGLLLIFVLAILFSNYFF.

Belongs to the PsbL family. PSII is composed of 1 copy each of membrane proteins PsbA, PsbB, PsbC, PsbD, PsbE, PsbF, PsbH, PsbI, PsbJ, PsbK, PsbL, PsbM, PsbT, PsbX, PsbY, PsbZ, Psb30/Ycf12, at least 3 peripheral proteins of the oxygen-evolving complex and a large number of cofactors. It forms dimeric complexes.

It is found in the plastid. The protein localises to the chloroplast thylakoid membrane. Its function is as follows. One of the components of the core complex of photosystem II (PSII). PSII is a light-driven water:plastoquinone oxidoreductase that uses light energy to abstract electrons from H(2)O, generating O(2) and a proton gradient subsequently used for ATP formation. It consists of a core antenna complex that captures photons, and an electron transfer chain that converts photonic excitation into a charge separation. This subunit is found at the monomer-monomer interface and is required for correct PSII assembly and/or dimerization. The sequence is that of Photosystem II reaction center protein L from Chara vulgaris (Common stonewort).